A 424-amino-acid polypeptide reads, in one-letter code: Histidine--tRNA ligase (424 aa).

This sequence belongs to the class-II aminoacyl-tRNA synthetase family. In terms of assembly, homodimer.

It is found in the cytoplasm. It catalyses the reaction tRNA(His) + L-histidine + ATP = L-histidyl-tRNA(His) + AMP + diphosphate + H(+). The protein is Histidine--tRNA ligase of Shewanella piezotolerans (strain WP3 / JCM 13877).